A 1867-amino-acid chain; its full sequence is Probable serine/threonine-protein kinase roco8 (1867 aa).

Residues 16-93 form the DEP 1 domain; it reads SSDGLQIKDR…DDYIFYQFDN (78 aa). Disordered regions lie at residues 96 to 115 and 121 to 225; these read NNNN…TTAT and VSTK…NSFN. Over residues 121-223 the composition is skewed to low complexity; it reads VSTKIGSIGK…NSNSTYNSNS (103 aa). Residues 264–342 form the DEP 2 domain; sequence GDKGLKLQKK…NNNNGGGGVM (79 aa). 8 LRR repeats span residues 491-512, 515-536, 540-561, 563-584, 586-607, 609-631, 633-656, and 657-678; these read RLDD…IINT, FLRI…ESIA, NLES…FSRL, LLTK…VFQL, NLEE…IGSL, SLEK…LGLL, RLKS…STLP, and LLEQ…ITSK. One can recognise a Roc domain in the interval 693–941; that stretch reads GTETLSHIKL…NEIIQTLLNQ (249 aa). 2 disordered regions span residues 763–813 and 942–961; these read QNGI…KKRP and SNNN…KQSN. Residues 768 to 793 show a composition bias toward low complexity; it reads TSSSNLNLSTGTLPPPTQLSSSTSEL. Residues 974–1111 enclose the COR domain; sequence PSIYITLETN…ILYTLKNNSN (138 aa). The tract at residues 1163-1207 is disordered; that stretch reads SPSLSLSNSSQSVFTNPNNNNNNKSEQQQQQQQQQQQPQPISTSP. The Protein kinase domain maps to 1456–1864; it reads LIYQEEIGVG…TLNEIKDSTI (409 aa). Residues 1462 to 1470 and lysine 1483 each bind ATP; that span reads IGVGGFSRV. Residues 1509 to 1546 form a disordered region; sequence SNSSLSISLSSSTSSLSPPIVNNNNNNNNLNNNLNNLN. Aspartate 1721 functions as the Proton acceptor in the catalytic mechanism.

The protein belongs to the protein kinase superfamily. TKL Ser/Thr protein kinase family. ROCO subfamily.

It catalyses the reaction L-seryl-[protein] + ATP = O-phospho-L-seryl-[protein] + ADP + H(+). The enzyme catalyses L-threonyl-[protein] + ATP = O-phospho-L-threonyl-[protein] + ADP + H(+). The sequence is that of Probable serine/threonine-protein kinase roco8 (roco8) from Dictyostelium discoideum (Social amoeba).